The chain runs to 85 residues: Sec-independent protein translocase protein TatA (85 aa).

A helical membrane pass occupies residues 1–21 (MGSFSIWHWLIVLVIIMMVFG). Residues 39-51 (FKDGMREGQEDKP) show a composition bias toward basic and acidic residues. The tract at residues 39-85 (FKDGMREGQEDKPAGSQQPQQTAGQPPRELHDATTIDVEARDKSKQG) is disordered. Over residues 53–62 (GSQQPQQTAG) the composition is skewed to polar residues. Basic and acidic residues predominate over residues 66-85 (RELHDATTIDVEARDKSKQG).

Belongs to the TatA/E family. As to quaternary structure, the Tat system comprises two distinct complexes: a TatABC complex, containing multiple copies of TatA, TatB and TatC subunits, and a separate TatA complex, containing only TatA subunits. Substrates initially bind to the TatABC complex, which probably triggers association of the separate TatA complex to form the active translocon.

It is found in the cell inner membrane. In terms of biological role, part of the twin-arginine translocation (Tat) system that transports large folded proteins containing a characteristic twin-arginine motif in their signal peptide across membranes. TatA could form the protein-conducting channel of the Tat system. This chain is Sec-independent protein translocase protein TatA, found in Ralstonia pickettii (strain 12J).